The primary structure comprises 268 residues: Zinc import ATP-binding protein ZnuC (268 aa).

Positions 16 to 231 (IQLKNINVVF…PTFMRLWGNQ (216 aa)) constitute an ABC transporter domain. 48 to 55 (GPNGGGKS) contributes to the ATP binding site.

The protein belongs to the ABC transporter superfamily. Zinc importer (TC 3.A.1.15.5) family. The complex is composed of two ATP-binding proteins (ZnuC), two transmembrane proteins (ZnuB) and a solute-binding protein (ZnuA).

Its subcellular location is the cell inner membrane. It catalyses the reaction Zn(2+)(out) + ATP(in) + H2O(in) = Zn(2+)(in) + ADP(in) + phosphate(in) + H(+)(in). In terms of biological role, part of the ABC transporter complex ZnuABC involved in zinc import. Responsible for energy coupling to the transport system. This Haemophilus influenzae (strain ATCC 51907 / DSM 11121 / KW20 / Rd) protein is Zinc import ATP-binding protein ZnuC.